A 117-amino-acid polypeptide reads, in one-letter code: MKMVVMVRTDINMGKGKIAAQVAHAAVSLVLDCMSRSSWRDWLDSWLHEGQPKVVVKVSSLEDLLSRVDKARSQGLPTTVISDAGRTQVEPGTVTCAGIGPGPDDLIDKITGDLKLL.

This sequence belongs to the PTH2 family.

The protein resides in the cytoplasm. It catalyses the reaction an N-acyl-L-alpha-aminoacyl-tRNA + H2O = an N-acyl-L-amino acid + a tRNA + H(+). Its function is as follows. The natural substrate for this enzyme may be peptidyl-tRNAs which drop off the ribosome during protein synthesis. The chain is Peptidyl-tRNA hydrolase from Metallosphaera sedula (strain ATCC 51363 / DSM 5348 / JCM 9185 / NBRC 15509 / TH2).